A 500-amino-acid polypeptide reads, in one-letter code: Protein FAM114A2 (500 aa).

The segment at 1–82 (MSNKDDLETA…AAGKETVSKD (82 aa)) is disordered. Ser-93, Ser-152, and Ser-215 each carry phosphoserine.

Belongs to the FAM114 family.

The chain is Protein FAM114A2 (FAM114A1) from Bos taurus (Bovine).